The following is a 412-amino-acid chain: MPQKRPTLELGSVLVVGGCGFLGWHIVDQLLNFPSETDASVALPKPEGDSRFDNPRLADRYPRCVAKVSVLDLRTANNRLPGAQYYDGDITSEESLLAIFRKVKPDVVIHTATANVLEGNKELLRKVNVDGTKTLLEVAGGDRGDWGGKCKAFVYTSSASVLHDTQSDLKNVNEDWPLIRGKLQLEYYSDTKAEAEEIVLKYNRASPSSMVTCALRPAGIYGEKDTTFTFKVLEHAAKASPTVLRMQLGDNNNLFDFTYVGNVAYSHLLAAYRLLATQTRYESGQSGPLDHEKVDGEAFNITNDSPVYFWDITRAAWALAGKVVEPNQVWQLSEDLLGPVGAVLETVFGLIGKTPRLTRRIVRYSCMTRYYSCEKAKYRLGYSPIVSVPEGLSRAVGYVLARERLESEKKGL.

NADP(+) contacts are provided by residues 17–23 (GGCGFLG), 89–90 (DI), and 111–113 (TAT). S158 and Y188 together coordinate substrate. Residues Y188, K192, and 217 to 220 (PAGI) each bind NADP(+). K192 serves as the catalytic Proton donor.

Belongs to the 3-beta-HSD family. In terms of assembly, heterotetramer of erg25, erg26, erg27 and erg28. Erg28 acts as a scaffold to tether erg27 and other 4,4-demethylation-related enzymes, forming a demethylation enzyme complex, in the endoplasmic reticulum.

The protein resides in the endoplasmic reticulum membrane. The protein operates within steroid metabolism; ergosterol biosynthesis. Functionally, sterol-C4-methyl oxidase; part of the third module of ergosterol biosynthesis pathway that includes the late steps of the pathway. Erg26 is a catalytic component of the C-4 demethylation complex that catalyzes the conversion of 4,4-dimethylfecosterol into fecosterol via 4-methylfecosterol. The third module or late pathway involves the ergosterol synthesis itself through consecutive reactions that mainly occur in the endoplasmic reticulum (ER) membrane. Firstly, the squalene synthase erg9 catalyzes the condensation of 2 farnesyl pyrophosphate moieties to form squalene, which is the precursor of all steroids. Squalene synthase is crucial for balancing the incorporation of farnesyl diphosphate (FPP) into sterol and nonsterol isoprene synthesis. Secondly, squalene is converted into lanosterol by the consecutive action of the squalene epoxidase erg1 and the lanosterol synthase erg7. Then, the delta(24)-sterol C-methyltransferase erg6 methylates lanosterol at C-24 to produce eburicol. Eburicol is the substrate of the sterol 14-alpha demethylase encoded by cyp51A and cyp51B, to yield 4,4,24-trimethyl ergosta-8,14,24(28)-trienol. The C-14 reductase erg24 then reduces the C14=C15 double bond which leads to 4,4-dimethylfecosterol. A sequence of further demethylations at C-4, involving the C-4 demethylation complex containing the C-4 methylsterol oxidases erg25A or erg25B, the sterol-4-alpha-carboxylate 3-dehydrogenase erg26 and the 3-keto-steroid reductase erg27, leads to the production of fecosterol via 4-methylfecosterol. The C-8 sterol isomerase erg2 then catalyzes the reaction which results in unsaturation at C-7 in the B ring of sterols and thus converts fecosterol to episterol. The sterol-C5-desaturase erg3B then catalyzes the introduction of a C-5 double bond in the B ring to produce 5-dehydroepisterol. The 2 other sterol-C5-desaturases, erg3A and erg3C, seem to be less important in ergosterol biosynthesis. The C-22 sterol desaturase erg5 further converts 5-dehydroepisterol into ergosta-5,7,22,24(28)-tetraen-3beta-ol by forming the C-22(23) double bond in the sterol side chain. Finally, ergosta-5,7,22,24(28)-tetraen-3beta-ol is substrate of the C-24(28) sterol reductases erg4A and erg4B to produce ergosterol. Possible alternative sterol biosynthetic pathways might exist from fecosterol to ergosterol, depending on the activities of the erg3 isoforms. The protein is Sterol-4-alpha-carboxylate 3-dehydrogenase erg26, decarboxylating of Aspergillus fumigatus (strain ATCC MYA-4609 / CBS 101355 / FGSC A1100 / Af293) (Neosartorya fumigata).